A 471-amino-acid chain; its full sequence is ATP synthase subunit beta (471 aa).

156–163 contributes to the ATP binding site; that stretch reads GGAGVGKT.

It belongs to the ATPase alpha/beta chains family. F-type ATPases have 2 components, CF(1) - the catalytic core - and CF(0) - the membrane proton channel. CF(1) has five subunits: alpha(3), beta(3), gamma(1), delta(1), epsilon(1). CF(0) has three main subunits: a(1), b(2) and c(9-12). The alpha and beta chains form an alternating ring which encloses part of the gamma chain. CF(1) is attached to CF(0) by a central stalk formed by the gamma and epsilon chains, while a peripheral stalk is formed by the delta and b chains.

The protein resides in the cell membrane. It carries out the reaction ATP + H2O + 4 H(+)(in) = ADP + phosphate + 5 H(+)(out). Functionally, produces ATP from ADP in the presence of a proton gradient across the membrane. The catalytic sites are hosted primarily by the beta subunits. The sequence is that of ATP synthase subunit beta from Mycoplasmoides gallisepticum (strain R(low / passage 15 / clone 2)) (Mycoplasma gallisepticum).